The primary structure comprises 290 residues: Pantothenate synthetase (290 aa).

Residue 30–37 (MGALHEGH) participates in ATP binding. Residue histidine 37 is the Proton donor of the active site. A (R)-pantoate-binding site is contributed by glutamine 61. Glutamine 61 provides a ligand contact to beta-alanine. ATP is bound at residue 147–150 (GEKD). Glutamine 153 is a (R)-pantoate binding site. ATP contacts are provided by residues valine 176 and 184–187 (KSSR).

This sequence belongs to the pantothenate synthetase family. In terms of assembly, homodimer.

The protein resides in the cytoplasm. It carries out the reaction (R)-pantoate + beta-alanine + ATP = (R)-pantothenate + AMP + diphosphate + H(+). It participates in cofactor biosynthesis; (R)-pantothenate biosynthesis; (R)-pantothenate from (R)-pantoate and beta-alanine: step 1/1. Functionally, catalyzes the condensation of pantoate with beta-alanine in an ATP-dependent reaction via a pantoyl-adenylate intermediate. The sequence is that of Pantothenate synthetase from Chlorobium chlorochromatii (strain CaD3).